Here is a 248-residue protein sequence, read N- to C-terminus: Ureidoacrylate amidohydrolase RutB (248 aa).

Catalysis depends on D41, which acts as the Proton acceptor. K150 is a catalytic residue. Residue C183 is the Nucleophile of the active site.

Belongs to the isochorismatase family. RutB subfamily.

It catalyses the reaction (Z)-3-ureidoacrylate + H2O + H(+) = (Z)-3-aminoacrylate + NH4(+) + CO2. The catalysed reaction is (Z)-3-ureidoacrylate + H2O = (Z)-3-aminoacrylate + carbamate + H(+). It carries out the reaction (Z)-2-methylureidoacrylate + H2O + H(+) = (Z)-2-methylaminoacrylate + NH4(+) + CO2. Its function is as follows. Hydrolyzes ureidoacrylate to form aminoacrylate and carbamate. The carbamate hydrolyzes spontaneously, thereby releasing one of the nitrogen atoms of the pyrimidine ring as ammonia and one of its carbon atoms as CO2. This Methylorubrum extorquens (strain CM4 / NCIMB 13688) (Methylobacterium extorquens) protein is Ureidoacrylate amidohydrolase RutB.